The sequence spans 122 residues: Small ribosomal subunit protein uS13 (122 aa).

The interval 93 to 122 is disordered; the sequence is RLSLPVRGQRTKTNSRTRKGKRKTVAGKKK. Residues 101-122 are compositionally biased toward basic residues; it reads QRTKTNSRTRKGKRKTVAGKKK.

It belongs to the universal ribosomal protein uS13 family. As to quaternary structure, part of the 30S ribosomal subunit. Forms a loose heterodimer with protein S19. Forms two bridges to the 50S subunit in the 70S ribosome.

In terms of biological role, located at the top of the head of the 30S subunit, it contacts several helices of the 16S rRNA. In the 70S ribosome it contacts the 23S rRNA (bridge B1a) and protein L5 of the 50S subunit (bridge B1b), connecting the 2 subunits; these bridges are implicated in subunit movement. Contacts the tRNAs in the A and P-sites. The sequence is that of Small ribosomal subunit protein uS13 from Chlamydia pneumoniae (Chlamydophila pneumoniae).